Reading from the N-terminus, the 177-residue chain is dCTP deaminase (177 aa).

DCTP is bound by residues 100–105 (RSSIAR) and D116. E126 (proton donor/acceptor) is an active-site residue. Residues Y159 and Q166 each contribute to the dCTP site.

The protein belongs to the dCTP deaminase family. Homotrimer.

It catalyses the reaction dCTP + H2O + H(+) = dUTP + NH4(+). It functions in the pathway pyrimidine metabolism; dUMP biosynthesis; dUMP from dCTP (dUTP route): step 1/2. Catalyzes the deamination of dCTP to dUTP. This Korarchaeum cryptofilum (strain OPF8) protein is dCTP deaminase.